The following is a 126-amino-acid chain: Adenosine 5'-monophosphoramidase HINT1 (126 aa).

Ala-2 carries the N-acetylalanine modification. The HIT domain occupies 18–126; that stretch reads IFGKIIRKEI…GGRQMNWPPG (109 aa). 2 positions are modified to N6-acetyllysine: Lys-21 and Lys-30. An AMP-binding site is contributed by 43–44; it reads DI. 2 positions are modified to phosphoserine: Ser-45 and Ser-72. Residues Asn-99, 105-107, and 112-114 each bind AMP; these read GQS and HLH. The Histidine triad motif signature appears at 110-114; it reads HVHLH. His-112 acts as the Tele-AMP-histidine intermediate in catalysis.

It belongs to the HINT family. In terms of assembly, homodimer. Interacts with CDK7. Interacts with RUVBL1 and RUVBL2 and is associated with the LEF1/TCF1-CTNNB1 complex and with a KAT5 histone acetyltransferase complex. Identified in a complex with MITF and CTNNB1. Interacts with CDC34 and RBX1, and is part of a SCF (SKP2-CUL1-F-box protein) E3 ubiquitin-protein ligase complex. Interacts with SUMO1, SUMO2 and RGS17. Interacts with the Ten-1 ICD form of TENM1. Interacts with CALM1; interaction increases in the presence of calcium ions. In terms of tissue distribution, widely expressed.

Its subcellular location is the cytoplasm. The protein localises to the nucleus. The enzyme catalyses adenosine 5'-phosphoramidate + H2O = AMP + NH4(+). Its function is as follows. Exhibits adenosine 5'-monophosphoramidase activity, hydrolyzing purine nucleotide phosphoramidates with a single phosphate group such as adenosine 5'monophosphoramidate (AMP-NH2) to yield AMP and NH2. Hydrolyzes adenosine 5'monophosphomorpholidate (AMP-morpholidate) and guanosine 5'monophosphomorpholidate (GMP-morpholidate). Hydrolyzes lysyl-AMP (AMP-N-epsilon-(N-alpha-acetyl lysine methyl ester)) generated by lysine tRNA ligase. Hydrolyzes Met-AMP, His-AMP, Asp-AMP, lysyl-GMP (GMP-N-epsilon-(N-alpha-acetyl lysine methyl ester)) and AMP-N-alanine methyl ester. Can also convert adenosine 5'-O-phosphorothioate and guanosine 5'-O-phosphorothioate to the corresponding nucleoside 5'-O-phosphates with concomitant release of hydrogen sulfide. In addition, functions as a scaffolding protein that modulates transcriptional activation by the LEF1/TCF1-CTNNB1 complex and by the complex formed with MITF and CTNNB1. Modulates p53/TP53 levels and p53/TP53-mediated apoptosis. Modulates proteasomal degradation of target proteins by the SCF (SKP2-CUL1-F-box protein) E3 ubiquitin-protein ligase complex. Also exhibits SUMO-specific isopeptidase activity, deconjugating SUMO1 from RANGAP1 and RGS17. This Oryctolagus cuniculus (Rabbit) protein is Adenosine 5'-monophosphoramidase HINT1 (HINT1).